Consider the following 244-residue polypeptide: Biosynthetic peptidoglycan transglycosylase (244 aa).

Residues 23 to 43 (LVVIGAWLAGILLFSFLPVPF) form a helical membrane-spanning segment.

The protein belongs to the glycosyltransferase 51 family.

It is found in the cell inner membrane. It carries out the reaction [GlcNAc-(1-&gt;4)-Mur2Ac(oyl-L-Ala-gamma-D-Glu-L-Lys-D-Ala-D-Ala)](n)-di-trans,octa-cis-undecaprenyl diphosphate + beta-D-GlcNAc-(1-&gt;4)-Mur2Ac(oyl-L-Ala-gamma-D-Glu-L-Lys-D-Ala-D-Ala)-di-trans,octa-cis-undecaprenyl diphosphate = [GlcNAc-(1-&gt;4)-Mur2Ac(oyl-L-Ala-gamma-D-Glu-L-Lys-D-Ala-D-Ala)](n+1)-di-trans,octa-cis-undecaprenyl diphosphate + di-trans,octa-cis-undecaprenyl diphosphate + H(+). It participates in cell wall biogenesis; peptidoglycan biosynthesis. Peptidoglycan polymerase that catalyzes glycan chain elongation from lipid-linked precursors. The protein is Biosynthetic peptidoglycan transglycosylase of Pectobacterium carotovorum subsp. carotovorum (strain PC1).